A 377-amino-acid chain; its full sequence is UPF0754 membrane protein lwe2241 (377 aa).

2 helical membrane-spanning segments follow: residues 1-21 and 357-377; these read MSVL…GAMT and YLGG…AIWI.

This sequence belongs to the UPF0754 family.

The protein localises to the cell membrane. The polypeptide is UPF0754 membrane protein lwe2241 (Listeria welshimeri serovar 6b (strain ATCC 35897 / DSM 20650 / CCUG 15529 / CIP 8149 / NCTC 11857 / SLCC 5334 / V8)).